We begin with the raw amino-acid sequence, 312 residues long: MTIKRKKVSVIGAGFTGATTAFLLAQKELADVVLVDIPQLENPTKGKALDMLEASPVQGFDANIIGTSDYADTADSDVVVITAGIARKPGMSRDDLVATNSKIMKSITRDIAKHSPNAIILVLTNPVDAMTYSVFKEAGFPKERVIGQSGVLDTARFRTFISQELNLSVKDITGFVLGGHGDDMVPLVRYSYAGGIPLETLIPKERLEAIVERTRKGGGEIVGLLGNGSAYYAPAASLVEMTEAILKDQRRVLPAIAYLEGEYGYSDLYLGVPVILGGNGIEKIIELELLADEKEALDRSVESVRNVMKVLV.

NAD(+) is bound by residues 12 to 17 and D36; that span reads GAGFTG. Residues R87 and R93 each coordinate substrate. Residues N100 and 123-125 contribute to the NAD(+) site; that span reads LTN. N125 serves as a coordination point for substrate. At S149 the chain carries Phosphoserine. R156 is a binding site for substrate. The active-site Proton acceptor is H180.

This sequence belongs to the LDH/MDH superfamily. MDH type 3 family.

The catalysed reaction is (S)-malate + NAD(+) = oxaloacetate + NADH + H(+). Catalyzes the reversible oxidation of malate to oxaloacetate. The sequence is that of Malate dehydrogenase from Bacillus mycoides (strain KBAB4) (Bacillus weihenstephanensis).